Consider the following 125-residue polypeptide: Secreted RxLR effector protein 22 (125 aa).

An N-terminal signal peptide occupies residues 1 to 26 (MRLIYSALVTAAAMVAISNGSTPARG). The interval 21 to 66 (STPARGNEVETRSLRGGNEVDSSMSDDGERAARGGGRVRSQASGVT) is disordered. Residues 32–50 (RSLRGGNEVDSSMSDDGER) carry the RxLR-dEER motif.

This sequence belongs to the RxLR effector family.

It is found in the secreted. Its subcellular location is the host nucleus. Its function is as follows. Effector that acts as a broad suppressor of cell death to interrupt plant immunity. Inhibits cell death induced by cell death-inducing proteins, including the PAMP elicitor INF1 from P.infestans. This chain is Secreted RxLR effector protein 22, found in Plasmopara viticola (Downy mildew of grapevine).